The primary structure comprises 277 residues: Undecaprenyl-diphosphatase 1 (277 aa).

7 helical membrane passes run 46–66 (VVGF…VYFF), 95–115 (WWVI…KSLI), 119–139 (LASL…MWAA), 165–185 (ILAL…TALI), 191–211 (VAAT…AGLY), 216–236 (ALGT…SFVV), and 256–276 (FVIY…TGVL).

This sequence belongs to the UppP family.

The protein resides in the cell membrane. It carries out the reaction di-trans,octa-cis-undecaprenyl diphosphate + H2O = di-trans,octa-cis-undecaprenyl phosphate + phosphate + H(+). Functionally, catalyzes the dephosphorylation of undecaprenyl diphosphate (UPP). Confers resistance to bacitracin. In Streptomyces avermitilis (strain ATCC 31267 / DSM 46492 / JCM 5070 / NBRC 14893 / NCIMB 12804 / NRRL 8165 / MA-4680), this protein is Undecaprenyl-diphosphatase 1.